A 262-amino-acid polypeptide reads, in one-letter code: Thiazole synthase (262 aa).

The Schiff-base intermediate with DXP role is filled by Lys97. 1-deoxy-D-xylulose 5-phosphate is bound by residues Gly158, 185-186 (AG), and 207-208 (NT).

This sequence belongs to the ThiG family. In terms of assembly, homotetramer. Forms heterodimers with either ThiH or ThiS.

The protein resides in the cytoplasm. It catalyses the reaction [ThiS sulfur-carrier protein]-C-terminal-Gly-aminoethanethioate + 2-iminoacetate + 1-deoxy-D-xylulose 5-phosphate = [ThiS sulfur-carrier protein]-C-terminal Gly-Gly + 2-[(2R,5Z)-2-carboxy-4-methylthiazol-5(2H)-ylidene]ethyl phosphate + 2 H2O + H(+). The protein operates within cofactor biosynthesis; thiamine diphosphate biosynthesis. Functionally, catalyzes the rearrangement of 1-deoxy-D-xylulose 5-phosphate (DXP) to produce the thiazole phosphate moiety of thiamine. Sulfur is provided by the thiocarboxylate moiety of the carrier protein ThiS. In vitro, sulfur can be provided by H(2)S. This Neisseria gonorrhoeae (strain ATCC 700825 / FA 1090) protein is Thiazole synthase.